A 348-amino-acid polypeptide reads, in one-letter code: Ribonuclease H (348 aa).

Polar residues predominate over residues 54–65; that stretch reads NTTSNYGSSTHA. A disordered region spans residues 54 to 81; it reads NTTSNYGSSTHAGGQVSKPHTTQKRVHR. The region spanning 184 to 346 is the RNase H type-1 domain; the sequence is YNKSMNVYCD…ADFLAKKGAS (163 aa). D193, E235, D264, and D338 together coordinate Mg(2+).

The protein belongs to the RNase H family. It depends on Mg(2+) as a cofactor.

It carries out the reaction Endonucleolytic cleavage to 5'-phosphomonoester.. Functionally, endonuclease that specifically degrades the RNA of RNA-DNA hybrids. The chain is Ribonuclease H (RNH1) from Saccharomyces cerevisiae (strain ATCC 204508 / S288c) (Baker's yeast).